A 203-amino-acid chain; its full sequence is Formate hydrogenlyase subunit 2 (203 aa).

4Fe-4S ferredoxin-type domains lie at 2 to 32 (NRFVIADSTLCIGCHTCEAACSETHRQHGLQ), 42 to 72 (NEKESAPQLCHHCEDAPCAVVCPVNAITRVD), 73 to 102 (GAVQLNESLCVSCKLCGIACPFGAIEFSGS), and 137 to 169 (RAIAVKCDLCSFDEQGPACVRMCPTKALHLVDN). Residues Cys12, Cys15, Cys18, Cys22, Cys51, Cys54, Cys59, Cys63, Cys82, Cys85, Cys88, Cys92, Cys143, Cys146, Cys155, and Cys159 each contribute to the [4Fe-4S] cluster site.

In terms of assembly, FHL comprises of a formate dehydrogenase, unidentified electron carriers and a hydrogenase (isoenzyme 3). In this non-energy conserving pathway, molecular hydrogen and carbodioxide are released from formate. It depends on [4Fe-4S] cluster as a cofactor.

In terms of biological role, probable electron transfer protein for hydrogenase 3. The protein is Formate hydrogenlyase subunit 2 (hycB) of Escherichia coli (strain K12).